A 230-amino-acid chain; its full sequence is MRKPSITITTAKAIITPDYTLIKSHSKYQLPSRFQKLDADSPERSTVVKLFYRRFMRLKPFISNVKMVKDTYRDYVRYKFMKENYELKRYLVFNPDGLRSKIKVELLSNTKCCEKILPVTEMQRTLEFVLKSCSYLPETKAQKWDIARDNTYCRQILKNLLTMQYEKYRSILHRGIGHDELDVKFSHLKTTSSPLTKLNKTEKKKIPLFKVFSDFDTTLIYLNETLGTRL.

The protein belongs to the IRC19 family.

Functionally, involved in sporulation and maintenance of the mitochondrial DNA. Is probably involved in a pathway contributing to genomic integrity. In Saccharomyces cerevisiae (strain AWRI1631) (Baker's yeast), this protein is Increased recombination centers protein 19 (IRC19).